The primary structure comprises 822 residues: Putative ESX-1 scaffolding and assembly protein SaeB (822 aa).

May be involved in assembly of the ESX-1 / type VII specialized secretion system (T7SS), which exports several proteins including EsxA and EsxB. Involved in DNA conjugation in recipient (MKD8) but not donor (mc(2)155) strain. The sequence is that of Putative ESX-1 scaffolding and assembly protein SaeB (saeB) from Mycolicibacterium smegmatis (strain MKD8) (Mycobacterium smegmatis).